An 891-amino-acid polypeptide reads, in one-letter code: Transportin-1 (891 aa).

HEAT repeat units lie at residues 14-40 (GLREICTLLDAHISPNSDQARIWQQLQ), 45-83 (FPDFNNYLVFLLARGEGKSFEARQAAGLLLKNNLRATFS), 92-125 (YVKSELLPCIGATNKAIRSTVGTVISVLFQIVRV), 131-168 (LFQALHQCLDSNDLDHMEGAMDAIYKICEDVPEELDVD), 178-208 (NVFMPRLLQFFQSTHAILRKLALGCINQYIV), 221-248 (YLQGLFNLAKDPSADVRKLVCSAWVQLI), 260-287 (KNVTELMLQANKDSDDEVALEACEFWSA), 303-381 (PRLI…LSNV), 389-420 (TLMPLIQQNLARTDDDAWKEREAAVLSIGAIA), 432-459 (PQIVAFLIPLLDDKFPLIRSITCWTLSR), 477-510 (FDKILLGLLRRVLDTNKRVQEAACSAFATLEEEA), 518-551 (LGIILQHLMCAYGKYQRRNLRILYDALGTLADAV), 559-597 (KYLDIFMPPLITKWQQLANSDKDLFPLLECFTSIAQALG), 605-653 (EPVF…GLGA), 664-695 (LRDILLQCCMDEAADVRQSALALLGDLSRVCP), 703-740 (QEFLNVAAKQLNPQCVKEAVSVANNACWAIGELAIKIG), 748-784 (ITVVSCLVPILKSPEGLNKSLLENSAITLGRLCWVCP), 792-825 (DHFMQAWCNALCMIRDDFEKEDAFHGLCAMVAAN), and 834-866 (TFICQACASWNEIKSEGLHNEVCQILNGYKQML). The Importin N-terminal domain occupies 35-103 (IWQQLQHYSQ…KSELLPCIGA (69 aa)). A compositionally biased stretch (acidic residues) spans 317–330 (DDDESLADAEEDES). The segment at 317 to 337 (DDDESLADAEEDESFPDRDQD) is disordered.

This sequence belongs to the importin beta family. Importin beta-2 subfamily.

The protein localises to the cytoplasm. The protein resides in the nucleus. Its subcellular location is the nucleoplasm. Functionally, functions in nuclear protein import as nuclear transport receptor. Serves as receptor for nuclear localization signals (NLS) in cargo substrates. Is thought to mediate docking of the importin/substrate complex to the nuclear pore complex (NPC) through binding to nucleoporin and the complex is subsequently translocated through the pore by an energy requiring, Ran-dependent mechanism. At the nucleoplasmic side of the NPC, Ran binds to the importin, the importin/substrate complex dissociates and importin is re-exported from the nucleus to the cytoplasm where GTP hydrolysis releases Ran. The directionality of nuclear import is thought to be conferred by an asymmetric distribution of the GTP- and GDP-bound forms of Ran between the cytoplasm and nucleus. The chain is Transportin-1 (TRN1) from Oryza sativa subsp. japonica (Rice).